Here is a 217-residue protein sequence, read N- to C-terminus: Pyridoxine/pyridoxamine 5'-phosphate oxidase (217 aa).

Substrate is bound by residues 13-16 (RREY) and Lys71. FMN-binding positions include 66 to 71 (RIVLLK), 81 to 82 (YT), Arg87, Lys88, and Gln110. Residues Tyr128, Arg132, and Ser136 each contribute to the substrate site. FMN is bound by residues 145–146 (QS) and Trp190. Substrate is bound at residue 196–198 (RLH). Arg200 provides a ligand contact to FMN.

It belongs to the pyridoxamine 5'-phosphate oxidase family. Homodimer. Requires FMN as cofactor.

The enzyme catalyses pyridoxamine 5'-phosphate + O2 + H2O = pyridoxal 5'-phosphate + H2O2 + NH4(+). It carries out the reaction pyridoxine 5'-phosphate + O2 = pyridoxal 5'-phosphate + H2O2. The protein operates within cofactor metabolism; pyridoxal 5'-phosphate salvage; pyridoxal 5'-phosphate from pyridoxamine 5'-phosphate: step 1/1. It participates in cofactor metabolism; pyridoxal 5'-phosphate salvage; pyridoxal 5'-phosphate from pyridoxine 5'-phosphate: step 1/1. Functionally, catalyzes the oxidation of either pyridoxine 5'-phosphate (PNP) or pyridoxamine 5'-phosphate (PMP) into pyridoxal 5'-phosphate (PLP). This chain is Pyridoxine/pyridoxamine 5'-phosphate oxidase, found in Serratia proteamaculans (strain 568).